The chain runs to 262 residues: Small ribosomal subunit protein uS2 (262 aa).

The disordered stretch occupies residues 228-262 (VSNEEVAAEQNIDLDESKEATEAETTEENTSVESN).

The protein belongs to the universal ribosomal protein uS2 family.

The polypeptide is Small ribosomal subunit protein uS2 (Staphylococcus saprophyticus subsp. saprophyticus (strain ATCC 15305 / DSM 20229 / NCIMB 8711 / NCTC 7292 / S-41)).